Reading from the N-terminus, the 362-residue chain is Vignain (362 aa).

A signal peptide spans 1 to 20 (MATKKLLWVVLSFSLVLGVA). A propeptide spans 21-131 (NSFDFHDKDL…YEKVVSVPPS (111 aa)) (activation peptide). Intrachain disulfides connect C149–C191, C183–C224, and C282–C334. Residue C152 is part of the active site. Active-site residues include H288 and N309. N-linked (GlcNAc...) asparagine glycans are attached at residues N326 and N346. The Prevents secretion from ER signature appears at 359–362 (KDEL).

This sequence belongs to the peptidase C1 family. In terms of assembly, monomer.

It localises to the endoplasmic reticulum lumen. Thought to be involved in the hydrolysis of stored seed proteins. The chain is Vignain from Phaseolus vulgaris (Kidney bean).